The primary structure comprises 110 residues: Large ribosomal subunit protein uL22 (110 aa).

It belongs to the universal ribosomal protein uL22 family. As to quaternary structure, part of the 50S ribosomal subunit.

In terms of biological role, this protein binds specifically to 23S rRNA; its binding is stimulated by other ribosomal proteins, e.g. L4, L17, and L20. It is important during the early stages of 50S assembly. It makes multiple contacts with different domains of the 23S rRNA in the assembled 50S subunit and ribosome. Its function is as follows. The globular domain of the protein is located near the polypeptide exit tunnel on the outside of the subunit, while an extended beta-hairpin is found that lines the wall of the exit tunnel in the center of the 70S ribosome. The polypeptide is Large ribosomal subunit protein uL22 (Citrobacter koseri (strain ATCC BAA-895 / CDC 4225-83 / SGSC4696)).